Consider the following 474-residue polypeptide: MSSTATVTESTHFFPNEPQGPSIKTETIPGPKGKAAAEEMSKYHDISAVKFPVDYEKSIGNYLVDLDGNVLLDVYSQIATIPIGYNNPTLLKAAKSDEVATILMNRPALGNYPPKEWARVAYEGAIKYAPKGQKYVYFQMSGSDANEIAYKLAMLHHFNNKPRPTGDYTAEENESCLNNAAPGSPEVAVLSFRHSFHGRLFGSLSTTRSKPVHKLGMPAFPWPQADFPALKYPLEEHVEENAKEEQRCIDQVEQILTNHHCPVVACIIEPIQSEGGDNHASPDFFHKLQATLKKHDVKFIVDEVQTGVGSTGTLWAHEQWNLPYPPDMVTFSKKFQAAGIFYHDLALRPHAYQHFNTWMGDPFRAVQSRYILQEIQDKDLLNNVKSVGDFLYAGLEELARKHPGKINNLRGKGKGTFIAWDCESPAARDKFCADMRINGVNIGGCGVAAIRLRPMLVFQKHHAQILLKKIDELI.

Polar residues predominate over residues methionine 1–phenylalanine 13. The tract at residues methionine 1–proline 31 is disordered. Pyridoxal 5'-phosphate is bound at residue glycine 142–serine 143. Arginine 199 contacts substrate. Lysine 333 is subject to N6-(pyridoxal phosphate)lysine. Threonine 357 lines the pyridoxal 5'-phosphate pocket.

It belongs to the class-III pyridoxal-phosphate-dependent aminotransferase family. Homodimer. The cofactor is pyridoxal 5'-phosphate.

The protein resides in the cytoplasm. It catalyses the reaction 4-aminobutanoate + 2-oxoglutarate = succinate semialdehyde + L-glutamate. Functionally, required for the degradation of gamma-aminobutyric acid (GABA), which is important for utilization of GABA as nitrogen source. Deaminates GABA to succinate-semialdehyde, which in turn is converted to succinate by the succinate semialdehyde dehydrogenase. Cannot transaminate beta-alanine (BAL). This Schizosaccharomyces pombe (strain 972 / ATCC 24843) (Fission yeast) protein is 4-aminobutyrate aminotransferase (uga1).